The chain runs to 363 residues: S-adenosylmethionine:tRNA ribosyltransferase-isomerase (363 aa).

The protein belongs to the QueA family. In terms of assembly, monomer.

Its subcellular location is the cytoplasm. The catalysed reaction is 7-aminomethyl-7-carbaguanosine(34) in tRNA + S-adenosyl-L-methionine = epoxyqueuosine(34) in tRNA + adenine + L-methionine + 2 H(+). Its pathway is tRNA modification; tRNA-queuosine biosynthesis. In terms of biological role, transfers and isomerizes the ribose moiety from AdoMet to the 7-aminomethyl group of 7-deazaguanine (preQ1-tRNA) to give epoxyqueuosine (oQ-tRNA). This is S-adenosylmethionine:tRNA ribosyltransferase-isomerase from Brucella melitensis biotype 2 (strain ATCC 23457).